Reading from the N-terminus, the 342-residue chain is Tetraacyldisaccharide 4'-kinase (342 aa).

Residue 68 to 75 (TVGGTGKT) participates in ATP binding.

It belongs to the LpxK family.

The enzyme catalyses a lipid A disaccharide + ATP = a lipid IVA + ADP + H(+). It functions in the pathway glycolipid biosynthesis; lipid IV(A) biosynthesis; lipid IV(A) from (3R)-3-hydroxytetradecanoyl-[acyl-carrier-protein] and UDP-N-acetyl-alpha-D-glucosamine: step 6/6. Its function is as follows. Transfers the gamma-phosphate of ATP to the 4'-position of a tetraacyldisaccharide 1-phosphate intermediate (termed DS-1-P) to form tetraacyldisaccharide 1,4'-bis-phosphate (lipid IVA). This Burkholderia lata (strain ATCC 17760 / DSM 23089 / LMG 22485 / NCIMB 9086 / R18194 / 383) protein is Tetraacyldisaccharide 4'-kinase.